A 513-amino-acid polypeptide reads, in one-letter code: cAMP-regulated M3R protein (513 aa).

It to D.discoideum protein M3L.

In Dictyostelium discoideum (Social amoeba), this protein is cAMP-regulated M3R protein (prtB).